A 557-amino-acid polypeptide reads, in one-letter code: Calcium-dependent protein kinase 4 (557 aa).

The segment at 1-72 is disordered; that stretch reads MGNTCRGSIG…LVSPRKASMN (72 aa). G2 carries N-myristoyl glycine lipidation. The segment covering 15 to 27 has biased composition (polar residues); sequence QGYTQPEDSSCST. Positions 28-48 are enriched in low complexity; it reads NHNPSSGNSYSSSDNFSPTSN. Positions 94–352 constitute a Protein kinase domain; sequence YTLGRKLGQG…AHEVLCHPWI (259 aa). Residues 100 to 108 and K123 contribute to the ATP site; that span reads LGQGQFGTT. The active-site Proton acceptor is the D218. The autoinhibitory domain stretch occupies residues 358–388; the sequence is APDRALDPAVLSRLKQFSAMNKLKKMALRVI. EF-hand domains lie at 395 to 430, 431 to 466, 467 to 502, and 506 to 536; these read EEIA…YGST, LKDT…LNKL, EREE…HNMT, and FEDI…GNPC. Ca(2+)-binding residues include D408, D410, S412, E419, D444, D446, S448, T450, E455, D480, D482, S484, Y486, E491, D514, D516, D518, R520, and E525.

Belongs to the protein kinase superfamily. Ser/Thr protein kinase family. CDPK subfamily.

Its subcellular location is the membrane. The catalysed reaction is L-seryl-[protein] + ATP = O-phospho-L-seryl-[protein] + ADP + H(+). It catalyses the reaction L-threonyl-[protein] + ATP = O-phospho-L-threonyl-[protein] + ADP + H(+). Activated by calcium. Autophosphorylation may play an important role in the regulation of the kinase activity. Functionally, regulates the production of reactive oxygen species (ROS) by NADPH oxidase. The polypeptide is Calcium-dependent protein kinase 4 (CPK4) (Solanum tuberosum (Potato)).